The sequence spans 391 residues: 8-amino-7-oxononanoate synthase (391 aa).

Position 19 (R19) interacts with substrate. Residue 106–107 coordinates pyridoxal 5'-phosphate; it reads GY. H131 serves as a coordination point for substrate. Residues S178, H206, and T234 each coordinate pyridoxal 5'-phosphate. Residue K237 is modified to N6-(pyridoxal phosphate)lysine. T353 provides a ligand contact to substrate.

The protein belongs to the class-II pyridoxal-phosphate-dependent aminotransferase family. BioF subfamily. As to quaternary structure, homodimer. The cofactor is pyridoxal 5'-phosphate.

It carries out the reaction 6-carboxyhexanoyl-[ACP] + L-alanine + H(+) = (8S)-8-amino-7-oxononanoate + holo-[ACP] + CO2. It participates in cofactor biosynthesis; biotin biosynthesis. Its function is as follows. Catalyzes the decarboxylative condensation of pimeloyl-[acyl-carrier protein] and L-alanine to produce 8-amino-7-oxononanoate (AON), [acyl-carrier protein], and carbon dioxide. The sequence is that of 8-amino-7-oxononanoate synthase from Geobacter sulfurreducens (strain ATCC 51573 / DSM 12127 / PCA).